Reading from the N-terminus, the 323-residue chain is tRNA U34 carboxymethyltransferase (323 aa).

Residues K91, W105, K110, G130, 152 to 154 (DPS), 181 to 182 (IE), M196, Y200, and R315 each bind carboxy-S-adenosyl-L-methionine.

This sequence belongs to the class I-like SAM-binding methyltransferase superfamily. CmoB family. In terms of assembly, homotetramer.

It catalyses the reaction carboxy-S-adenosyl-L-methionine + 5-hydroxyuridine(34) in tRNA = 5-carboxymethoxyuridine(34) in tRNA + S-adenosyl-L-homocysteine + H(+). Functionally, catalyzes carboxymethyl transfer from carboxy-S-adenosyl-L-methionine (Cx-SAM) to 5-hydroxyuridine (ho5U) to form 5-carboxymethoxyuridine (cmo5U) at position 34 in tRNAs. In Vibrio campbellii (strain ATCC BAA-1116), this protein is tRNA U34 carboxymethyltransferase.